The following is a 285-amino-acid chain: Bifunctional protein FolD (285 aa).

Residues 165–167 (GRS) and serine 190 each bind NADP(+).

The protein belongs to the tetrahydrofolate dehydrogenase/cyclohydrolase family. Homodimer.

The enzyme catalyses (6R)-5,10-methylene-5,6,7,8-tetrahydrofolate + NADP(+) = (6R)-5,10-methenyltetrahydrofolate + NADPH. The catalysed reaction is (6R)-5,10-methenyltetrahydrofolate + H2O = (6R)-10-formyltetrahydrofolate + H(+). It functions in the pathway one-carbon metabolism; tetrahydrofolate interconversion. Catalyzes the oxidation of 5,10-methylenetetrahydrofolate to 5,10-methenyltetrahydrofolate and then the hydrolysis of 5,10-methenyltetrahydrofolate to 10-formyltetrahydrofolate. This is Bifunctional protein FolD from Burkholderia ambifaria (strain ATCC BAA-244 / DSM 16087 / CCUG 44356 / LMG 19182 / AMMD) (Burkholderia cepacia (strain AMMD)).